The chain runs to 110 residues: Parvalbumin alpha (110 aa).

Serine 2 carries the post-translational modification N-acetylserine. A phosphoserine mark is found at serine 2, serine 8, and serine 24. EF-hand domains are found at residues 39 to 74 (KNPD…FSSD) and 78 to 110 (LSAK…VAES). Ca(2+)-binding residues include aspartate 52, aspartate 54, serine 56, phenylalanine 58, glutamate 60, glutamate 63, aspartate 91, aspartate 93, aspartate 95, lysine 97, and glutamate 102.

As to expression, expressed in the modiolar nerve root (at protein level).

In muscle, parvalbumin is thought to be involved in relaxation after contraction. It binds two calcium ions. The polypeptide is Parvalbumin alpha (Pvalb) (Mus musculus (Mouse)).